Consider the following 131-residue polypeptide: Small ribosomal subunit protein uS11 (131 aa).

It belongs to the universal ribosomal protein uS11 family. Part of the 30S ribosomal subunit. Interacts with proteins S7 and S18. Binds to IF-3.

Located on the platform of the 30S subunit, it bridges several disparate RNA helices of the 16S rRNA. Forms part of the Shine-Dalgarno cleft in the 70S ribosome. In Cellvibrio japonicus (strain Ueda107) (Pseudomonas fluorescens subsp. cellulosa), this protein is Small ribosomal subunit protein uS11.